The sequence spans 122 residues: Phospholipase A2 crotoxin basic chain (122 aa).

7 disulfides stabilise this stretch: C26–C115, C28–C44, C43–C95, C49–C122, C50–C88, C57–C81, and C75–C86. Positions 27, 29, and 31 each coordinate Ca(2+). H47 is an active-site residue. D48 lines the Ca(2+) pocket. The active site involves D89.

Heterodimer of one acidic (CA also named crotapotin) and one basic (CB) subunits; non-covalently linked. It depends on Ca(2+) as a cofactor. As to expression, expressed by the venom gland.

It localises to the secreted. The catalysed reaction is a 1,2-diacyl-sn-glycero-3-phosphocholine + H2O = a 1-acyl-sn-glycero-3-phosphocholine + a fatty acid + H(+). In terms of biological role, heterodimer CA-CB: Crotoxin is a potent presynaptic neurotoxin that possesses phospholipase A2 (PLA2) activity and exerts a lethal action by blocking neuromuscular transmission. It consists of a non-covalent association of a basic and weakly toxic PLA2 subunit (CB), with a small acidic, non-enzymatic and non-toxic subunit (CA also named crotapotin). The complex acts by binding to a specific 48-kDa protein (R48) receptor located on presynaptic membranes, forming a transient ternary complex CA-CB-R48, followed by dissociation of the CA-CB complex and release of the CA subunit. At equilibrium, only the CB subunits remain associated with the specific crotoxin receptor. In addition to neurotoxicity, crotoxin has been found to exert nephrotoxicity, and cardiovascular toxicity. Moreover, anti-inflammatory, immunomodulatory, anti-tumor and analgesic effects of crotoxin have also been reported. Functionally, monomer CB: The basic subunit of crotoxin is a snake venom phospholipase A2 (PLA2) that exhibits weak neurotoxicity and strong anticoagulant effects by binding to factor Xa (F10) and inhibiting the prothrombinase activity. In addition, it exerts myotoxicity, nephrotoxicity, and cardiovascular toxicity as well as anti-inflammatory, immunomodulatory, anti-tumor and analgesic effects. Also shows a strong antimicrobial activity against X.axonopodis passiforae (Gram-negative) which is completely dependent on the enzymatic activity. PLA2 catalyzes the calcium-dependent hydrolysis of the 2- acyl groups in 3-sn-phosphoglycerides. This Crotalus durissus collilineatus (Brazilian rattlesnake) protein is Phospholipase A2 crotoxin basic chain.